The chain runs to 566 residues: Protein downstream neighbor of Son (566 aa).

Positions 1 to 110 (MALSVPGYSP…QPEAPVPFLD (110 aa)) are disordered. Residues serine 28 and serine 34 each carry the phosphoserine modification. Gly residues predominate over residues 62–72 (GGRGGGSGGGP). Low complexity predominate over residues 73–82 (AAARRNPFAR).

It belongs to the DONSON family. As to quaternary structure, component of the replisome complex composed of at least DONSON, MCM2, MCM7, PCNA and TICRR; interaction at least with PCNA occurs during DNA replication. In terms of tissue distribution, expressed in the brain, with higher levels in prenatal compared to adult brain.

The protein localises to the nucleus. Its function is as follows. Replisome component that maintains genome stability by protecting stalled or damaged replication forks. After the induction of replication stress, required for the stabilization of stalled replication forks, the efficient activation of the intra-S-phase and G/2M cell-cycle checkpoints and the maintenance of genome stability. The polypeptide is Protein downstream neighbor of Son (DONSON) (Homo sapiens (Human)).